The chain runs to 94 residues: Small ribosomal subunit protein uS19 (94 aa).

Belongs to the universal ribosomal protein uS19 family.

Protein S19 forms a complex with S13 that binds strongly to the 16S ribosomal RNA. The chain is Small ribosomal subunit protein uS19 from Dictyoglomus turgidum (strain DSM 6724 / Z-1310).